Here is a 356-residue protein sequence, read N- to C-terminus: Guanine nucleotide-binding protein alpha-17 subunit (356 aa).

The N-myristoyl glycine moiety is linked to residue Gly-2. Cys-4 is lipidated: S-palmitoyl cysteine. The G-alpha domain occupies 32 to 356; that stretch reads SIVKLLLLGA…QKNLQKAGMM (325 aa). The tract at residues 35–48 is G1 motif; sequence KLLLLGAGECGKST. GTP-binding positions include 40 to 47, 177 to 183, 202 to 206, 271 to 274, and Ala-328; these read GAGECGKS, LYSRVAT, DVGGQ, and NKKD. 2 residues coordinate Mg(2+): Ser-47 and Thr-183. Residues 175 to 183 form a G2 motif region; sequence DILYSRVAT. The segment at 198-207 is G3 motif; it reads FRVFDVGGQR. Residues 267–274 are G4 motif; the sequence is ILFMNKKD. The tract at residues 326 to 331 is G5 motif; it reads TCATDT.

It belongs to the G-alpha family. G proteins are composed of 3 units; alpha, beta and gamma. The alpha chain contains the guanine nucleotide binding site.

The protein resides in the cell projection. The protein localises to the cilium. It is found in the dendrite. Guanine nucleotide-binding proteins (G proteins) are involved as modulators or transducers in various transmembrane signaling systems. This specific G-alpha subunit plays an important role in olfaction and in cilia morphogenesis. Involved in chemotactic responses to attractants diacetyl, pyrazine, 2,4,5-trimethylthiazole, benzaldehyde, isoamyl alcohol, butanone and 2,3-pentanedione. Displays a redundant function with gpa-3 in chemotactic responses. Involved in avoidance responses to copper, sodium dodecyl sulfate and linoleic acid. Involved in osmotic avoidance and mechanosensory responses. Involved in specifying fan-like morphology of cilia of head sensory neurons AWC. The polypeptide is Guanine nucleotide-binding protein alpha-17 subunit (odr-3) (Caenorhabditis briggsae).